A 353-amino-acid chain; its full sequence is DNA polymerase IV (353 aa).

Residues 14 to 198 form the UmuC domain; that stretch reads IIHIDMDAFF…MDISKFHGVG (185 aa). Mg(2+) is bound by residues D18 and D116. The active site involves E117.

The protein belongs to the DNA polymerase type-Y family. In terms of assembly, monomer. The cofactor is Mg(2+).

The protein localises to the cytoplasm. The enzyme catalyses DNA(n) + a 2'-deoxyribonucleoside 5'-triphosphate = DNA(n+1) + diphosphate. Its function is as follows. Poorly processive, error-prone DNA polymerase involved in untargeted mutagenesis. Copies undamaged DNA at stalled replication forks, which arise in vivo from mismatched or misaligned primer ends. These misaligned primers can be extended by PolIV. Exhibits no 3'-5' exonuclease (proofreading) activity. May be involved in translesional synthesis, in conjunction with the beta clamp from PolIII. In Streptococcus pneumoniae serotype 4 (strain ATCC BAA-334 / TIGR4), this protein is DNA polymerase IV.